The following is a 201-amino-acid chain: ATP-dependent Clp protease proteolytic subunit 2 (201 aa).

Residue Ser-98 is the Nucleophile of the active site. Residue His-123 is part of the active site.

The protein belongs to the peptidase S14 family. In terms of assembly, fourteen ClpP subunits assemble into 2 heptameric rings which stack back to back to give a disk-like structure with a central cavity, resembling the structure of eukaryotic proteasomes.

It is found in the cytoplasm. The enzyme catalyses Hydrolysis of proteins to small peptides in the presence of ATP and magnesium. alpha-casein is the usual test substrate. In the absence of ATP, only oligopeptides shorter than five residues are hydrolyzed (such as succinyl-Leu-Tyr-|-NHMec, and Leu-Tyr-Leu-|-Tyr-Trp, in which cleavage of the -Tyr-|-Leu- and -Tyr-|-Trp bonds also occurs).. In terms of biological role, cleaves peptides in various proteins in a process that requires ATP hydrolysis. Has a chymotrypsin-like activity. Plays a major role in the degradation of misfolded proteins. This is ATP-dependent Clp protease proteolytic subunit 2 from Rhizobium johnstonii (strain DSM 114642 / LMG 32736 / 3841) (Rhizobium leguminosarum bv. viciae).